A 319-amino-acid chain; its full sequence is Na(+)-translocating NADH-quinone reductase subunit C (319 aa).

The helical transmembrane segment at 14 to 34 threads the bilayer; the sequence is WYVILFIFALSLFSSVFLSTV. FMN phosphoryl threonine is present on threonine 283.

Belongs to the NqrC family. In terms of assembly, composed of six subunits; NqrA, NqrB, NqrC, NqrD, NqrE and NqrF. FMN serves as cofactor.

It is found in the cell inner membrane. The catalysed reaction is a ubiquinone + n Na(+)(in) + NADH + H(+) = a ubiquinol + n Na(+)(out) + NAD(+). NQR complex catalyzes the reduction of ubiquinone-1 to ubiquinol by two successive reactions, coupled with the transport of Na(+) ions from the cytoplasm to the periplasm. NqrA to NqrE are probably involved in the second step, the conversion of ubisemiquinone to ubiquinol. This Chlamydia caviae (strain ATCC VR-813 / DSM 19441 / 03DC25 / GPIC) (Chlamydophila caviae) protein is Na(+)-translocating NADH-quinone reductase subunit C.